The primary structure comprises 255 residues: Triosephosphate isomerase (255 aa).

Residue 15-17 (NWK) coordinates substrate. The active-site Electrophile is His-100. Glu-172 serves as the catalytic Proton acceptor. Substrate is bound by residues Gly-178, Ser-218, and 239–240 (GG).

This sequence belongs to the triosephosphate isomerase family. In terms of assembly, homodimer.

Its subcellular location is the cytoplasm. It carries out the reaction D-glyceraldehyde 3-phosphate = dihydroxyacetone phosphate. Its pathway is carbohydrate biosynthesis; gluconeogenesis. The protein operates within carbohydrate degradation; glycolysis; D-glyceraldehyde 3-phosphate from glycerone phosphate: step 1/1. Its function is as follows. Involved in the gluconeogenesis. Catalyzes stereospecifically the conversion of dihydroxyacetone phosphate (DHAP) to D-glyceraldehyde-3-phosphate (G3P). The protein is Triosephosphate isomerase of Clostridium tetani (strain Massachusetts / E88).